Here is a 152-residue protein sequence, read N- to C-terminus: Deoxyuridine 5'-triphosphate nucleotidohydrolase (152 aa).

Substrate-binding positions include 71-73 (RSG), Asn84, 88-90 (LID), and Met98.

This sequence belongs to the dUTPase family. Mg(2+) is required as a cofactor.

The catalysed reaction is dUTP + H2O = dUMP + diphosphate + H(+). It functions in the pathway pyrimidine metabolism; dUMP biosynthesis; dUMP from dCTP (dUTP route): step 2/2. Functionally, this enzyme is involved in nucleotide metabolism: it produces dUMP, the immediate precursor of thymidine nucleotides and it decreases the intracellular concentration of dUTP so that uracil cannot be incorporated into DNA. The protein is Deoxyuridine 5'-triphosphate nucleotidohydrolase of Aeromonas salmonicida (strain A449).